The primary structure comprises 535 residues: MVLHLVPRWSASLFRASPRWKKTYSQRASAQLKWLGCPRSVYSPLACRAYSKVSGSPEVMLTPERYPVQRLPFSTVSEEDLAAFECIIPGRVITDPEQLQTCNVDWLRTVRGCSKVLLRPQTSEEVSQILRHCYKRNLAVNPQGGNTGMVGGSVPVFDEVILSTALMNQVISFHDVSGILVCQAGCVLEELSRYVQERDFIMPLDLGAKGSCHIGGNVATNAGGLRFLRYGSLRGTVLGLEVVLADGTILNCLTSLRKDNTGYDLKQMFIGSEGTLGVITAVSIVCPPRPKAVNVAFLGCPGFTEVLQTFRTCKGQLGEILSAFEFMDAECMQLVGQHLHLTNPVQESPFYVLVETSGSSAGHDAEKLTNVLEQVLNSGLVIDGTMATDQRKVQMLWALRERITEALSRDGYVFKYDLSLPVERLYDLVIDLRTRLGPRAKHVVGYGHLGDGNLHLNVTAEAFSQELLGALEPYVYAWTAEQRGSVSAEHGLGFKKKNVLGYSKPPVAVKLMQQLKAMLDPKGILNPYKTLPARA.

The transit peptide at 1–50 directs the protein to the mitochondrion; that stretch reads MVLHLVPRWSASLFRASPRWKKTYSQRASAQLKWLGCPRSVYSPLACRAY. Residues 110–289 form the FAD-binding PCMH-type domain; the sequence is VRGCSKVLLR…TAVSIVCPPR (180 aa). Lys115 is subject to N6-succinyllysine. Arg400, Thr404, and Lys415 together coordinate (R)-2-hydroxyglutarate. Arg400 is a binding site for (R)-lactate. Positions 400, 404, and 415 each coordinate (R)-malate. His448 and His455 together coordinate Zn(2+). Asn457 contributes to the (R)-2-hydroxyglutarate binding site. Position 489 (Glu489) interacts with Zn(2+). His490 lines the (R)-2-hydroxyglutarate pocket. His490 contributes to the (R)-lactate binding site. His490 is a (R)-malate binding site.

It belongs to the FAD-binding oxidoreductase/transferase type 4 family. FAD is required as a cofactor.

The protein resides in the mitochondrion. It carries out the reaction (R)-2-hydroxyglutarate + A = 2-oxoglutarate + AH2. The enzyme catalyses (R)-malate + A = oxaloacetate + AH2. Activated by zinc, cobalt and manganese ions. Inhibited by EDTA. Its function is as follows. Catalyzes the oxidation of D-2-hydroxyglutarate (D-2-HG) to alpha-ketoglutarate. Also catalyzes the oxidation of other D-2-hydroxyacids, such as D-malate (D-MAL) and D-lactate (D-LAC). Exhibits high activities towards D-2-HG and D-MAL but a very weak activity towards D-LAC. This chain is D-2-hydroxyglutarate dehydrogenase, mitochondrial, found in Rattus norvegicus (Rat).